A 415-amino-acid polypeptide reads, in one-letter code: Extracellular signal-regulated kinase 1 (415 aa).

In terms of domain architecture, Protein kinase spans 66 to 369; the sequence is YQILEIVGEG…VEDALKHPYL (304 aa). ATP contacts are provided by residues 72–80 and K95; that span reads VGEGAYGIV. D190 (proton acceptor) is an active-site residue. T226 carries the phosphothreonine modification. The TXY motif lies at 226–228; it reads TEY. Y228 is subject to Phosphotyrosine.

Belongs to the protein kinase superfamily. CMGC Ser/Thr protein kinase family. MAP kinase subfamily. Mg(2+) is required as a cofactor. Dually phosphorylated on Thr-226 and Tyr-228, which activates the enzyme.

It carries out the reaction L-seryl-[protein] + ATP = O-phospho-L-seryl-[protein] + ADP + H(+). It catalyses the reaction L-threonyl-[protein] + ATP = O-phospho-L-threonyl-[protein] + ADP + H(+). Its activity is regulated as follows. Activated by tyrosine and threonine phosphorylation. This Candida albicans (strain WO-1) (Yeast) protein is Extracellular signal-regulated kinase 1 (CEK1).